The sequence spans 236 residues: ATP synthase subunit a (236 aa).

5 helical membrane passes run 17-37 (LSDMLMITITCLIVFIIAVAA), 75-95 (FLTLGVTLIMYVFVANMLGLP), 112-132 (DATVTLTLAVMVVALTHYYGV), 174-194 (IYAGEILLGLLASLGTHYGVL), and 208-228 (FSIFVGTIQAFIFTMLTMVYM).

Belongs to the ATPase A chain family. As to quaternary structure, F-type ATPases have 2 components, CF(1) - the catalytic core - and CF(0) - the membrane proton channel. CF(1) has five subunits: alpha(3), beta(3), gamma(1), delta(1), epsilon(1). CF(0) has three main subunits: a(1), b(2) and c(9-12). The alpha and beta chains form an alternating ring which encloses part of the gamma chain. CF(1) is attached to CF(0) by a central stalk formed by the gamma and epsilon chains, while a peripheral stalk is formed by the delta and b chains.

The protein resides in the cell membrane. Key component of the proton channel; it plays a direct role in the translocation of protons across the membrane. This Geobacillus stearothermophilus (Bacillus stearothermophilus) protein is ATP synthase subunit a.